Here is a 703-residue protein sequence, read N- to C-terminus: MPSSPSRSILRGLTVSEICKFIPQSWKQLPRPISETSKTHDDESVPQVLFNSFRHCISHGQLYEAFRTFSLLRYQSGSHEFVLYSSASLLSTCVGFNEFVPGQQLHAHCISSGLEFDSVLVPKLVTFYSAFNLLDEAQTITENSEILHPLPWNVLIGSYIRNKRFQESVSVYKRMMSKGIRADEFTYPSVIKACAALLDFAYGRVVHGSIEVSSHRCNLYVCNALISMYKRFGKVDVARRLFDRMSERDAVSWNAIINCYTSEEKLGEAFKLLDRMYLSGVEASIVTWNTIAGGCLEAGNYIGALNCVVGMRNCNVRIGSVAMINGLKACSHIGALKWGKVFHCLVIRSCSFSHDIDNVRNSLITMYSRCSDLRHAFIVFQQVEANSLSTWNSIISGFAYNERSEETSFLLKEMLLSGFHPNHITLASILPLFARVGNLQHGKEFHCYILRRQSYKDCLILWNSLVDMYAKSGEIIAAKRVFDSMRKRDKVTYTSLIDGYGRLGKGEVALAWFKDMDRSGIKPDHVTMVAVLSACSHSNLVREGHWLFTKMEHVFGIRLRLEHYSCMVDLYCRAGYLDKARDIFHTIPYEPSSAMCATLLKACLIHGNTNIGEWAADKLLLETKPEHLGHYMLLADMYAVTGSWSKLVTVKTLLSDLGVQKAHEFALMETDSELDGENNKPMNDDSVINQEQSSDEERLVEVG.

15 PPR repeats span residues 82–116 (VLYS…GLEF), 117–147 (DSVL…SEIL), 148–182 (HPLP…GIRA), 183–217 (DEFT…SHRC), 218–248 (NLYV…MSER), 249–283 (DAVS…GVEA), 284–318 (SIVT…NVRI), 319–353 (GSVA…CSFS), 356–386 (IDNV…VEAN), 387–421 (SLST…GFHP), 422–452 (NHIT…ILRR), 458–488 (CLIL…MRKR), 489–523 (DKVT…GIKP), 524–554 (DHVT…MEHV), and 560–594 (RLEH…PSSA). The interval 595-671 (MCATLLKACL…AHEFALMETD (77 aa)) is type E motif. Residues 671 to 703 (DSELDGENNKPMNDDSVINQEQSSDEERLVEVG) form a disordered region.

The protein belongs to the PPR family. PCMP-E subfamily.

The sequence is that of Pentatricopeptide repeat-containing protein At1g22830 (PCMP-E24) from Arabidopsis thaliana (Mouse-ear cress).